The primary structure comprises 100 residues: Small ribosomal subunit protein uS14c (100 aa).

The protein belongs to the universal ribosomal protein uS14 family. In terms of assembly, part of the 30S ribosomal subunit.

Its subcellular location is the plastid. The protein resides in the chloroplast. Its function is as follows. Binds 16S rRNA, required for the assembly of 30S particles. The protein is Small ribosomal subunit protein uS14c of Mesostigma viride (Green alga).